The following is a 385-amino-acid chain: Torsin-3A (385 aa).

The first 21 residues, 1–21 (MFLGALWLLLLLPLRPPGAQG), serve as a signal peptide directing secretion. N110 is a glycosylation site (N-linked (GlcNAc...) asparagine). 155–162 (GWSGTGKN) contacts ATP.

This sequence belongs to the ClpA/ClpB family. Torsin subfamily. In terms of assembly, interacts with TOR1AIP1. Post-translationally, N-glycosylated.

The protein localises to the cytoplasm. Its subcellular location is the endoplasmic reticulum lumen. This chain is Torsin-3A (Tor3a), found in Mus musculus (Mouse).